The sequence spans 149 residues: Chromophore lyase CpcS/CpeS homolog (149 aa).

The protein belongs to the CpcS/CpeS biliprotein lyase family.

It localises to the plastid. Its subcellular location is the chloroplast. Its function is as follows. Might function to covalently attach a chromophore to Cys residue(s) of phycobiliproteins. This chain is Chromophore lyase CpcS/CpeS homolog, found in Porphyra purpurea (Red seaweed).